The primary structure comprises 66 residues: Large ribosomal subunit protein uL29 (66 aa).

This sequence belongs to the universal ribosomal protein uL29 family.

In Allorhizobium ampelinum (strain ATCC BAA-846 / DSM 112012 / S4) (Agrobacterium vitis (strain S4)), this protein is Large ribosomal subunit protein uL29.